Consider the following 256-residue polypeptide: Inner membrane transport permease YadH (256 aa).

Residues 1-22 are Periplasmic-facing; that stretch reads MMHLYWVALKSIWAKEIHRFMR. An ABC transmembrane type-2 domain is found at 22–251; the sequence is RIWVQTLVPP…LICWSLIQRG (230 aa). A helical transmembrane segment spans residues 23 to 43; sequence IWVQTLVPPVITMTLYFIIFG. Residues 44-52 are Cytoplasmic-facing; the sequence is NLIGSRIGD. Residues 53–73 form a helical membrane-spanning segment; sequence MHGFSYMQFIVPGLIMMSVIT. The Periplasmic portion of the chain corresponds to 74 to 94; it reads NAYANVASSFFGAKFQRNIEE. A helical membrane pass occupies residues 95-115; sequence LLVAPVPTHVIIAGYVGGGVA. A topological domain (cytoplasmic) is located at residue Arg116. A helical transmembrane segment spans residues 117-137; sequence GLFVGILVTAISLFFVPFQVH. Ser138 is a topological domain (periplasmic). The chain crosses the membrane as a helical span at residues 139–159; sequence WVFVALTLVLTAVLFSLAGLL. Residues 160 to 169 are Cytoplasmic-facing; that stretch reads NGVFAKTFDD. A helical membrane pass occupies residues 170 to 190; the sequence is ISLVPTFVLTPLTYLGGVFYS. Residues 191–223 lie on the Periplasmic side of the membrane; the sequence is LTLLPPFWQGLSHLNPIVYMISGFRYGFLGIND. A helical transmembrane segment spans residues 224-244; sequence VPLVTTFGVLVVFIVAFYLIC. Residues 245–256 are Cytoplasmic-facing; that stretch reads WSLIQRGRGLRS.

This sequence belongs to the ABC-2 integral membrane protein family.

The protein localises to the cell inner membrane. This Escherichia coli O157:H7 protein is Inner membrane transport permease YadH (yadH).